A 471-amino-acid polypeptide reads, in one-letter code: tRNA modification GTPase MnmE (471 aa).

(6S)-5-formyl-5,6,7,8-tetrahydrofolate-binding residues include Arg26, Glu83, and Lys136. One can recognise a TrmE-type G domain in the interval 232–393; it reads GLRVVLAGQP…LRRRLLQLAG (162 aa). Asn242 lines the K(+) pocket. GTP contacts are provided by residues 242–247, 261–267, 286–289, 354–357, and 374–376; these read NVGKSS, TPIAGTT, DTAG, NKAD, and SAR. Residue Ser246 participates in Mg(2+) binding. The K(+) site is built by Thr261, Ile263, and Thr266. Thr267 contacts Mg(2+). Residue Lys471 coordinates (6S)-5-formyl-5,6,7,8-tetrahydrofolate.

It belongs to the TRAFAC class TrmE-Era-EngA-EngB-Septin-like GTPase superfamily. TrmE GTPase family. As to quaternary structure, homodimer. Heterotetramer of two MnmE and two MnmG subunits. K(+) serves as cofactor.

Its subcellular location is the cytoplasm. In terms of biological role, exhibits a very high intrinsic GTPase hydrolysis rate. Involved in the addition of a carboxymethylaminomethyl (cmnm) group at the wobble position (U34) of certain tRNAs, forming tRNA-cmnm(5)s(2)U34. In Methylibium petroleiphilum (strain ATCC BAA-1232 / LMG 22953 / PM1), this protein is tRNA modification GTPase MnmE.